The primary structure comprises 865 residues: MPNIIRKLVENDKKELKKLNKMALQVESFADEMEHLTDEQLKAKTPELKERIAKGESLDDLLYEAFAVCREAARRVLGLYPFHVQIMGGIVLHNGDVPEMRTGEGKTLTATMPVYLNALSGKGVHVVTVNEYLATRDMTEMGELYSWLGLTVGLNLNSKSPEEKREAYNCDITYSTSAELGFDYLRDNMVTRAEDMVQKPLNYALVDEVDSILVDEARTPLIISGQAESSSALYYRADQFTKTLKGQNLNVATSDYEEGDDYKIDLQSKTISLTEEGIDKAEKFFQIENLYDMENVALTHFVDNALRANFIMLHDIDYMVDENQEVLIIDQFTGRTMPGRRYSDGLHQAIEAKEAVPIQDESKTMASITIQNYFRMYKKLSGMTGTAKTEEEEFREIYNIQITPIPTNRPVQRLDHPDLLYPTLEAKFKAVIDDIKRRHAEGQPILIGTVAVETSELISKKLVEAKIPHEVLNAKNHFREAQIIMNAGQQGAVTIATNMAGRGTDIKLGPGVIDHADPEFRGLAVIGTERHESRRIDNQLRGRSGRQGDPGVSQFYLSLEDELMKRFGSERVSAFLDRMRISGEDAVIKSGLITRQIESSQKRVEGNNYDSRKQVLQYDDVIREQREVIYAQRQEVILTKEDMTPVLMGMFKRTIDRQVDGHELAGNLKDEETVKDLLQTVQNTMLPEEAIELSELTGLSGQAMKDLIFDKVKSRYASQMEKLADPERQLEFQRAVILRVVDNNWSEHIDALDQMRQSVGLRGYAQNNPIVEYQEESYKMYNNMIGAIEFEVTRLMMKAQIQPQTAIRQEAPRMTTTASQENITNVGPDTSVSEEISFENVGRNDPCPCGSGKKFKNCHGRTHIA.

Residues glutamine 85, 103 to 107 (GEGKT), and aspartate 505 contribute to the ATP site. 4 residues coordinate Zn(2+): cysteine 847, cysteine 849, cysteine 858, and histidine 859.

This sequence belongs to the SecA family. Monomer and homodimer. Part of the essential Sec protein translocation apparatus which comprises SecA, SecYEG and auxiliary proteins SecDF. Other proteins may also be involved. The cofactor is Zn(2+).

Its subcellular location is the cell membrane. The protein resides in the cytoplasm. It carries out the reaction ATP + H2O + cellular proteinSide 1 = ADP + phosphate + cellular proteinSide 2.. Part of the Sec protein translocase complex. Interacts with the SecYEG preprotein conducting channel. Has a central role in coupling the hydrolysis of ATP to the transfer of proteins into and across the cell membrane, serving as an ATP-driven molecular motor driving the stepwise translocation of polypeptide chains across the membrane. The chain is Protein translocase subunit SecA from Lactococcus lactis subsp. cremoris (strain MG1363).